A 1883-amino-acid polypeptide reads, in one-letter code: Lysophospholipase NTE1 (1883 aa).

The Cytoplasmic portion of the chain corresponds to 1-75 (MSQVPVASPA…LLRVVLASLN (75 aa)). A helical transmembrane segment spans residues 76–96 (LIRILATFSTITVPSLVYAIL). Over 97 to 103 (HYSLTLQ) the chain is Lumenal. The chain crosses the membrane as a helical span at residues 104-124 (LNFPSLALLFLTSLISAFIWL). The Cytoplasmic segment spans residues 125–1883 (RYRHLNKYER…AGISARRNSI (1759 aa)). Disordered regions lie at residues 284–327 (HLAP…FNPP), 355–410 (ERLG…LYHA), 618–693 (SQRS…MVGP), 716–764 (SAQP…RKGS), 921–1069 (EEDR…ATNS), and 1084–1108 (LHQQ…GKRS). A compositionally biased stretch (polar residues) spans 311 to 327 (NNATAPTSPYSSAFNPP). Low complexity predominate over residues 372-383 (ARTASSGTASAT). The span at 650–668 (PSLTTSSKQSNQKPTSSRI) shows a compositional bias: polar residues. A nucleoside 3',5'-cyclic phosphate contacts are provided by residues 863 to 1158 (AGHG…RRPI) and 1166 to 1285 (RLLS…IARR). Residues 936-948 (TDASSGSSRQNRP) show a composition bias toward polar residues. A compositionally biased stretch (basic and acidic residues) spans 964 to 974 (LLDERNLREAD). Polar residues-rich tracts occupy residues 988-998 (ISSNGDGNSGS) and 1084-1100 (LHQQ…QSSQ). The 165-residue stretch at 1544 to 1708 (LVLGGGGARG…VDNLPVTVML (165 aa)) folds into the PNPLA domain. Residues 1548–1553 (GGGARG) carry the GXGXXG motif. The GXSXG motif lies at 1575–1579 (GTSIG). Ser-1577 serves as the catalytic Nucleophile. The active-site Proton acceptor is the Asp-1695. The DGA/G motif lies at 1695-1697 (DGG). The disordered stretch occupies residues 1852-1883 (DESGVGGGVRKIRKKRRRTRRKAGISARRNSI). Positions 1861–1874 (RKIRKKRRRTRRKA) are enriched in basic residues.

Belongs to the NTE family.

It is found in the endoplasmic reticulum membrane. The catalysed reaction is a 1-acyl-sn-glycero-3-phosphocholine + H2O = sn-glycerol 3-phosphocholine + a fatty acid + H(+). With respect to regulation, inhibited by organophosphorus esters. In terms of biological role, intracellular phospholipase B that catalyzes the double deacylation of phosphatidylcholine (PC) to glycerophosphocholine (GroPCho). Plays an important role in membrane lipid homeostasis. Responsible for the rapid PC turnover in response to inositol, elevated temperatures, or when choline is present in the growth medium. This is Lysophospholipase NTE1 (NTE1) from Mycosarcoma maydis (Corn smut fungus).